A 186-amino-acid chain; its full sequence is MIRELEYYGSHILRRKADIIPEITDATRQLVQDMYETMVAHKGVGLAAPQVGESLSLFVMCVEGETEEGDLIFCDFPKVYINPVLSNPSEDLVIGREGCLSIPGLRADVYRPQSITVTAVNLDGQEFTEHLEGFPARIIMHENDHLHGVLYIDKMEEPKDIKKFKASLEKIRRRYHAHVKPEDRAS.

Fe cation-binding residues include Cys-99 and His-141. Residue Glu-142 is part of the active site. A Fe cation-binding site is contributed by His-145.

Belongs to the polypeptide deformylase family. Fe(2+) serves as cofactor.

The enzyme catalyses N-terminal N-formyl-L-methionyl-[peptide] + H2O = N-terminal L-methionyl-[peptide] + formate. In terms of biological role, removes the formyl group from the N-terminal Met of newly synthesized proteins. Requires at least a dipeptide for an efficient rate of reaction. N-terminal L-methionine is a prerequisite for activity but the enzyme has broad specificity at other positions. This chain is Peptide deformylase, found in Chlamydia caviae (strain ATCC VR-813 / DSM 19441 / 03DC25 / GPIC) (Chlamydophila caviae).